The primary structure comprises 65 residues: DNA-directed RNA polymerase subunit Rpo10 (65 aa).

Zn(2+) is bound by residues cysteine 7, cysteine 10, cysteine 44, and cysteine 45.

Belongs to the archaeal Rpo10/eukaryotic RPB10 RNA polymerase subunit family. In terms of assembly, part of the RNA polymerase complex. Zn(2+) serves as cofactor.

The protein resides in the cytoplasm. It catalyses the reaction RNA(n) + a ribonucleoside 5'-triphosphate = RNA(n+1) + diphosphate. Functionally, DNA-dependent RNA polymerase (RNAP) catalyzes the transcription of DNA into RNA using the four ribonucleoside triphosphates as substrates. This is DNA-directed RNA polymerase subunit Rpo10 from Thermococcus onnurineus (strain NA1).